The following is a 325-amino-acid chain: Delta(1)-pyrroline-2-carboxylate reductase (325 aa).

It belongs to the ornithine cyclodeaminase/mu-crystallin family.

The enzyme catalyses L-proline + NAD(+) = 1-pyrroline-2-carboxylate + NADH + H(+). It carries out the reaction L-proline + NADP(+) = 1-pyrroline-2-carboxylate + NADPH + H(+). Catalyzes the reduction of Delta(1)-pyrroline-2-carboxylate (Pyr2C) to L-proline, using preferentially NADPH over NADH as the electron donor. May be involved in a degradation pathway that converts trans-3-hydroxy-L-proline (t3LHyp) to L-proline. In Bacillus cereus (strain ZK / E33L), this protein is Delta(1)-pyrroline-2-carboxylate reductase.